Here is a 364-residue protein sequence, read N- to C-terminus: 1-acyl-sn-glycerol-3-phosphate acyltransferase epsilon (364 aa).

2 helical membrane passes run 15–35 (LLPSVVLLGTAPTYVLAWGVW) and 61–81 (MVLFFFENYTGVQILLYGDLP). Residues 93 to 98 (HQSTVD) carry the HXXXXD motif motif. Residues 344–364 (LYVNTWIYGTLLGCLWVTIKA) form a helical membrane-spanning segment.

It belongs to the 1-acyl-sn-glycerol-3-phosphate acyltransferase family. As to expression, widely expressed.

It localises to the endoplasmic reticulum membrane. The protein resides in the nucleus envelope. It is found in the mitochondrion. It carries out the reaction a 1-acyl-sn-glycero-3-phosphate + an acyl-CoA = a 1,2-diacyl-sn-glycero-3-phosphate + CoA. The enzyme catalyses 1-(9Z-octadecenoyl)-sn-glycero-3-phosphate + tetradecanoyl-CoA = 1-(9Z)-octadecenoyl-2-tetradecanoyl-sn-glycero-3-phosphate + CoA. It catalyses the reaction pentadecanoyl-CoA + 1-(9Z-octadecenoyl)-sn-glycero-3-phosphate = 1-(9Z)-octadecenoyl-2-pentadecanoyl-sn-glycero-3-phosphate + CoA. The catalysed reaction is 1-(9Z-octadecenoyl)-sn-glycero-3-phosphate + octadecanoyl-CoA = 1-(9Z-octadecenoyl)-2-octadecanoyl-sn-glycero-3-phosphate + CoA. It carries out the reaction nonadecanoyl-CoA + 1-(9Z-octadecenoyl)-sn-glycero-3-phosphate = 1-(9Z)-octadecenoyl-2-nonadecanoyl-sn-glycero-3-phosphate + CoA. The enzyme catalyses 1-(9Z-octadecenoyl)-sn-glycero-3-phosphoethanolamine + (9Z)-octadecenoyl-CoA = 1,2-di-(9Z-octadecenoyl)-sn-glycero-3-phosphoethanolamine + CoA. It catalyses the reaction 1-(9Z-octadecenoyl)-sn-glycero-3-phosphocholine + (9Z)-octadecenoyl-CoA = 1,2-di-(9Z-octadecenoyl)-sn-glycero-3-phosphocholine + CoA. The catalysed reaction is 1-(9Z-octadecenoyl)-sn-glycero-3-phospho-(1D-myo-inositol) + (5Z,8Z,11Z,14Z)-eicosatetraenoyl-CoA = 1-(9Z-octadecenoyl)-2-(5Z,8Z,11Z,14Z-eicosatetraenoyl)-sn-glycero-3-phospho-1D-myo-inositol + CoA. It carries out the reaction 1-(9Z-octadecenoyl)-sn-glycero-3-phospho-L-serine + (9Z)-octadecenoyl-CoA = 1,2-di-(9Z)-octadecenoyl-sn-glycero-3-phospho-L-serine + CoA. The enzyme catalyses 1-(9Z-octadecenoyl)-sn-glycero-3-phospho-L-serine + (5Z,8Z,11Z,14Z)-eicosatetraenoyl-CoA = 1-(9Z-octadecenoyl)-2-(5Z,8Z,11Z,14Z-eicosatetraenoyl)-sn-glycero-3-phospho-L-serine + CoA. It catalyses the reaction 1-hexadecanoyl-sn-glycero-3-phosphate + (9Z)-octadecenoyl-CoA = 1-hexadecanoyl-2-(9Z-octadecenoyl)-sn-glycero-3-phosphate + CoA. The catalysed reaction is 1-heptadecanoyl-sn-glycero-3-phosphate + (9Z)-octadecenoyl-CoA = 1-heptadecanoyl-2-(9Z)-octadecenoyl-sn-glycero-3-phosphate + CoA. It carries out the reaction 1-(5Z,8Z,11Z,14Z-eicosatetraenoyl)-sn-glycero-3-phosphate + (9Z)-octadecenoyl-CoA = 1-(5Z,8Z,11Z,14Z)-eicosatetraenoyl-2-(9Z)-octadecenoyl-sn-glycero-3-phosphate + CoA. The enzyme catalyses 1-octadecanoyl-sn-glycero-3-phosphate + (9Z)-octadecenoyl-CoA = 1-octadecanoyl-2-(9Z-octadecenoyl)-sn-glycero-3-phosphate + CoA. It catalyses the reaction 1-(9Z-octadecenoyl)-sn-glycero-3-phosphate + (5Z,8Z,11Z,14Z)-eicosatetraenoyl-CoA = 1-(9Z)-octadecenoyl-2-(5Z,8Z,11Z,14Z)-eicosatetraenoyl-sn-glycero-3-phosphate + CoA. The catalysed reaction is heptadecanoyl-CoA + 1-(9Z-octadecenoyl)-sn-glycero-3-phosphate = 1-(9Z)-octadecenoyl-2-heptadecanoyl-sn-glycero-3-phosphate + CoA. It carries out the reaction 1-(9Z-octadecenoyl)-sn-glycero-3-phosphocholine + (5Z,8Z,11Z,14Z)-eicosatetraenoyl-CoA = 1-(9Z)-octadecenoyl-2-(5Z,8Z,11Z,14Z)-icosatetraenoyl-sn-glycero-3-phosphocholine + CoA. The enzyme catalyses 1-(9Z-octadecenoyl)-sn-glycero-3-phosphate + (9Z)-octadecenoyl-CoA = 1,2-di-(9Z-octadecenoyl)-sn-glycero-3-phosphate + CoA. It catalyses the reaction 1-(9Z-octadecenoyl)-sn-glycero-3-phosphate + hexadecanoyl-CoA = 1-hexadecanoyl-2-(9Z-octadecenoyl)-sn-glycero-3-phosphate + CoA. The protein operates within phospholipid metabolism; CDP-diacylglycerol biosynthesis; CDP-diacylglycerol from sn-glycerol 3-phosphate: step 2/3. In terms of biological role, converts 1-acyl-sn-glycerol-3-phosphate (lysophosphatidic acid or LPA) into 1,2-diacyl-sn-glycerol-3-phosphate (phosphatidic acid or PA) by incorporating an acyl moiety at the sn-2 position of the glycerol backbone. Acts on LPA containing saturated or unsaturated fatty acids C15:0-C20:4 at the sn-1 position using C18:1-CoA as the acyl donor. Also acts on lysophosphatidylethanolamine using oleoyl-CoA, but not arachidonoyl-CoA, and lysophosphatidylinositol using arachidonoyl-CoA, but not oleoyl-CoA. Activity toward lysophosphatidylglycerol not detectable. The protein is 1-acyl-sn-glycerol-3-phosphate acyltransferase epsilon (AGPAT5) of Homo sapiens (Human).